We begin with the raw amino-acid sequence, 204 residues long: Small ribosomal subunit protein uS7 (204 aa).

Belongs to the universal ribosomal protein uS7 family. As to quaternary structure, part of the 30S ribosomal subunit.

One of the primary rRNA binding proteins, it binds directly to 16S rRNA where it nucleates assembly of the head domain of the 30S subunit. Is located at the subunit interface close to the decoding center. This chain is Small ribosomal subunit protein uS7, found in Methanoregula boonei (strain DSM 21154 / JCM 14090 / 6A8).